The primary structure comprises 364 residues: tRNA 2-selenouridine synthase (364 aa).

The 124-residue stretch at 14–137 folds into the Rhodanese domain; that stretch reads LLADTPLIDV…LRQTAIQATW (124 aa). The S-selanylcysteine intermediate role is filled by Cys-97.

Belongs to the SelU family. Monomer.

The enzyme catalyses 5-methylaminomethyl-2-thiouridine(34) in tRNA + selenophosphate + (2E)-geranyl diphosphate + H2O + H(+) = 5-methylaminomethyl-2-selenouridine(34) in tRNA + (2E)-thiogeraniol + phosphate + diphosphate. The catalysed reaction is 5-methylaminomethyl-2-thiouridine(34) in tRNA + (2E)-geranyl diphosphate = 5-methylaminomethyl-S-(2E)-geranyl-thiouridine(34) in tRNA + diphosphate. It catalyses the reaction 5-methylaminomethyl-S-(2E)-geranyl-thiouridine(34) in tRNA + selenophosphate + H(+) = 5-methylaminomethyl-2-(Se-phospho)selenouridine(34) in tRNA + (2E)-thiogeraniol. It carries out the reaction 5-methylaminomethyl-2-(Se-phospho)selenouridine(34) in tRNA + H2O = 5-methylaminomethyl-2-selenouridine(34) in tRNA + phosphate. Involved in the post-transcriptional modification of the uridine at the wobble position (U34) of tRNA(Lys), tRNA(Glu) and tRNA(Gln). Catalyzes the conversion of 2-thiouridine (S2U-RNA) to 2-selenouridine (Se2U-RNA). Acts in a two-step process involving geranylation of 2-thiouridine (S2U) to S-geranyl-2-thiouridine (geS2U) and subsequent selenation of the latter derivative to 2-selenouridine (Se2U) in the tRNA chain. This Salmonella agona (strain SL483) protein is tRNA 2-selenouridine synthase.